Consider the following 876-residue polypeptide: Alanine--tRNA ligase (876 aa).

The Zn(2+) site is built by His-568, His-572, Cys-670, and His-674.

Belongs to the class-II aminoacyl-tRNA synthetase family. Zn(2+) serves as cofactor.

It is found in the cytoplasm. The catalysed reaction is tRNA(Ala) + L-alanine + ATP = L-alanyl-tRNA(Ala) + AMP + diphosphate. Catalyzes the attachment of alanine to tRNA(Ala) in a two-step reaction: alanine is first activated by ATP to form Ala-AMP and then transferred to the acceptor end of tRNA(Ala). Also edits incorrectly charged Ser-tRNA(Ala) and Gly-tRNA(Ala) via its editing domain. The protein is Alanine--tRNA ligase of Anaplasma phagocytophilum (strain HZ).